The following is a 79-amino-acid chain: Exodeoxyribonuclease 7 small subunit (79 aa).

The protein belongs to the XseB family. Heterooligomer composed of large and small subunits.

Its subcellular location is the cytoplasm. The enzyme catalyses Exonucleolytic cleavage in either 5'- to 3'- or 3'- to 5'-direction to yield nucleoside 5'-phosphates.. In terms of biological role, bidirectionally degrades single-stranded DNA into large acid-insoluble oligonucleotides, which are then degraded further into small acid-soluble oligonucleotides. This is Exodeoxyribonuclease 7 small subunit from Haemophilus influenzae (strain PittGG).